The chain runs to 153 residues: NAD(P)H-quinone oxidoreductase subunit N (153 aa).

Belongs to the complex I NdhN subunit family. NDH-1 can be composed of about 15 different subunits; different subcomplexes with different compositions have been identified which probably have different functions.

It is found in the cellular thylakoid membrane. It carries out the reaction a plastoquinone + NADH + (n+1) H(+)(in) = a plastoquinol + NAD(+) + n H(+)(out). The catalysed reaction is a plastoquinone + NADPH + (n+1) H(+)(in) = a plastoquinol + NADP(+) + n H(+)(out). Its function is as follows. NDH-1 shuttles electrons from an unknown electron donor, via FMN and iron-sulfur (Fe-S) centers, to quinones in the respiratory and/or the photosynthetic chain. The immediate electron acceptor for the enzyme in this species is believed to be plastoquinone. Couples the redox reaction to proton translocation, and thus conserves the redox energy in a proton gradient. Cyanobacterial NDH-1 also plays a role in inorganic carbon-concentration. The protein is NAD(P)H-quinone oxidoreductase subunit N of Synechococcus sp. (strain CC9311).